A 153-amino-acid chain; its full sequence is Ribosome maturation factor RimP (153 aa).

This sequence belongs to the RimP family.

Its subcellular location is the cytoplasm. In terms of biological role, required for maturation of 30S ribosomal subunits. In Marinobacter nauticus (strain ATCC 700491 / DSM 11845 / VT8) (Marinobacter aquaeolei), this protein is Ribosome maturation factor RimP.